The following is a 251-amino-acid chain: 3-deoxy-manno-octulosonate cytidylyltransferase (251 aa).

The protein belongs to the KdsB family.

It localises to the cytoplasm. It carries out the reaction 3-deoxy-alpha-D-manno-oct-2-ulosonate + CTP = CMP-3-deoxy-beta-D-manno-octulosonate + diphosphate. Its pathway is nucleotide-sugar biosynthesis; CMP-3-deoxy-D-manno-octulosonate biosynthesis; CMP-3-deoxy-D-manno-octulosonate from 3-deoxy-D-manno-octulosonate and CTP: step 1/1. It participates in bacterial outer membrane biogenesis; lipopolysaccharide biosynthesis. In terms of biological role, activates KDO (a required 8-carbon sugar) for incorporation into bacterial lipopolysaccharide in Gram-negative bacteria. This chain is 3-deoxy-manno-octulosonate cytidylyltransferase, found in Brucella canis (strain ATCC 23365 / NCTC 10854 / RM-666).